We begin with the raw amino-acid sequence, 209 residues long: Uracil phosphoribosyltransferase (209 aa).

Residues Arg-79, Arg-104, and 131–139 (DPMLATGGS) contribute to the 5-phospho-alpha-D-ribose 1-diphosphate site. Uracil-binding positions include Ile-194 and 199 to 201 (GDA). Asp-200 contacts 5-phospho-alpha-D-ribose 1-diphosphate.

It belongs to the UPRTase family. Mg(2+) serves as cofactor.

It carries out the reaction UMP + diphosphate = 5-phospho-alpha-D-ribose 1-diphosphate + uracil. It functions in the pathway pyrimidine metabolism; UMP biosynthesis via salvage pathway; UMP from uracil: step 1/1. Allosterically activated by GTP. Its function is as follows. Catalyzes the conversion of uracil and 5-phospho-alpha-D-ribose 1-diphosphate (PRPP) to UMP and diphosphate. The chain is Uracil phosphoribosyltransferase from Oceanobacillus iheyensis (strain DSM 14371 / CIP 107618 / JCM 11309 / KCTC 3954 / HTE831).